Reading from the N-terminus, the 97-residue chain is Large ribosomal subunit protein bL31 (97 aa).

Residues 75–97 (NKTKKSNQAKVEKQTRHRSINEL) form a disordered region. Residues 84–97 (KVEKQTRHRSINEL) show a composition bias toward basic and acidic residues.

It belongs to the bacterial ribosomal protein bL31 family. Type A subfamily. In terms of assembly, part of the 50S ribosomal subunit.

Its function is as follows. Binds the 23S rRNA. The polypeptide is Large ribosomal subunit protein bL31 (Mycoplasma genitalium (strain ATCC 33530 / DSM 19775 / NCTC 10195 / G37) (Mycoplasmoides genitalium)).